The chain runs to 106 residues: Thioredoxin-2 (106 aa).

Residues 2–106 (VYQIKDKADL…RLEDVIKANI (105 aa)) form the Thioredoxin domain. Residues Cys32 and Cys35 each act as nucleophile in the active site. Cys32 and Cys35 are joined by a disulfide.

This sequence belongs to the thioredoxin family.

Functionally, participates in various redox reactions through the reversible oxidation of its active center dithiol to a disulfide and catalyzes dithiol-disulfide exchange reactions. As a reducing substrate of peroxiredoxin 1, thioredoxin 2 is preferred over thioredoxin 1. The polypeptide is Thioredoxin-2 (Drosophila yakuba (Fruit fly)).